Consider the following 424-residue polypeptide: Serine--tRNA ligase (424 aa).

Residue Thr-231–Glu-233 coordinates L-serine. Arg-262–Glu-264 contacts ATP. Residue Glu-285 coordinates L-serine. Glu-349–Ser-352 contacts ATP. Position 385 (Ser-385) interacts with L-serine.

This sequence belongs to the class-II aminoacyl-tRNA synthetase family. Type-1 seryl-tRNA synthetase subfamily. In terms of assembly, homodimer. The tRNA molecule binds across the dimer.

The protein localises to the cytoplasm. It catalyses the reaction tRNA(Ser) + L-serine + ATP = L-seryl-tRNA(Ser) + AMP + diphosphate + H(+). It carries out the reaction tRNA(Sec) + L-serine + ATP = L-seryl-tRNA(Sec) + AMP + diphosphate + H(+). It participates in aminoacyl-tRNA biosynthesis; selenocysteinyl-tRNA(Sec) biosynthesis; L-seryl-tRNA(Sec) from L-serine and tRNA(Sec): step 1/1. Catalyzes the attachment of serine to tRNA(Ser). Is also able to aminoacylate tRNA(Sec) with serine, to form the misacylated tRNA L-seryl-tRNA(Sec), which will be further converted into selenocysteinyl-tRNA(Sec). The protein is Serine--tRNA ligase of Bacillus cereus (strain ZK / E33L).